The sequence spans 260 residues: MARNVTDFHGILLFRRDYAERDFLIKFFTQEFGKKMFLVRGAKKRGFKMVADILPFTVGSYVGDIADDGLSYIRTARETRQFQDISADIFKNAYATYIMSLVDTAFPDSQPLPDWYHRVQRALTLIDDGVNAAIVTNIMEIQLMPAFGVAPQLQGCAVCGRNDLPFDYSESYGGLLCQAHWTLDPRRLHVSQRTIYYLRQFSVLDLDRLHTIKVKPQTEHALRQLMDEIYDSQIGVHPKSKRFLDQMQSWSARLKPPTDH.

This sequence belongs to the RecO family.

Its function is as follows. Involved in DNA repair and RecF pathway recombination. This is DNA repair protein RecO from Levilactobacillus brevis (strain ATCC 367 / BCRC 12310 / CIP 105137 / JCM 1170 / LMG 11437 / NCIMB 947 / NCTC 947) (Lactobacillus brevis).